Consider the following 87-residue polypeptide: uncharacterized protein (87 aa).

An N-terminal signal peptide occupies residues 1–26 (MMSTQHFILSLTILIIISNLHDEVNA). Intrachain disulfides connect C61/C75, C68/C79, and C74/C84.

It is found in the secreted. This is an uncharacterized protein from Schistosoma japonicum (Blood fluke).